We begin with the raw amino-acid sequence, 438 residues long: Probable inactive protein kinase 38 (438 aa).

The 264-residue stretch at 77 to 340 folds into the Protein kinase domain; it reads PRFRLALGKG…FTELQPQYFL (264 aa).

This sequence belongs to the protein kinase superfamily. Tyr protein kinase family.

This is Probable inactive protein kinase 38 (36) from Equus caballus (Horse).